The sequence spans 355 residues: Beta-ketoacyl-[acyl-carrier-protein] synthase III (355 aa).

Active-site residues include Cys122 and His280. Residues 281-285 are ACP-binding; the sequence is QANMR. Asn311 is an active-site residue.

The protein belongs to the thiolase-like superfamily. FabH family. As to quaternary structure, homodimer.

It is found in the cytoplasm. The catalysed reaction is malonyl-[ACP] + acetyl-CoA + H(+) = 3-oxobutanoyl-[ACP] + CO2 + CoA. The protein operates within lipid metabolism; fatty acid biosynthesis. In terms of biological role, catalyzes the condensation reaction of fatty acid synthesis by the addition to an acyl acceptor of two carbons from malonyl-ACP. Catalyzes the first condensation reaction which initiates fatty acid synthesis and may therefore play a role in governing the total rate of fatty acid production. Possesses both acetoacetyl-ACP synthase and acetyl transacylase activities. Its substrate specificity determines the biosynthesis of branched-chain and/or straight-chain of fatty acids. The protein is Beta-ketoacyl-[acyl-carrier-protein] synthase III of Kocuria rhizophila (strain ATCC 9341 / DSM 348 / NBRC 103217 / DC2201).